Reading from the N-terminus, the 706-residue chain is Methionine--tRNA ligase (706 aa).

The short motif at 13–23 (PYANGSIHLGH) is the 'HIGH' region element. Zn(2+) is bound by residues Cys144, Cys147, Cys157, and Cys160. The short motif at 336–340 (KMSKS) is the 'KMSKS' region element. Lys339 serves as a coordination point for ATP. The disordered stretch occupies residues 570 to 593 (QQTMNTETESHSPQRHGQAQQHPV). The 103-residue stretch at 604-706 (DFVKIDLRIA…SGAQPGMRVK (103 aa)) folds into the tRNA-binding domain.

This sequence belongs to the class-I aminoacyl-tRNA synthetase family. MetG type 1 subfamily. In terms of assembly, homodimer. The cofactor is Zn(2+).

Its subcellular location is the cytoplasm. The enzyme catalyses tRNA(Met) + L-methionine + ATP = L-methionyl-tRNA(Met) + AMP + diphosphate. Is required not only for elongation of protein synthesis but also for the initiation of all mRNA translation through initiator tRNA(fMet) aminoacylation. The chain is Methionine--tRNA ligase from Nitrosomonas europaea (strain ATCC 19718 / CIP 103999 / KCTC 2705 / NBRC 14298).